Reading from the N-terminus, the 540-residue chain is Protein PALS2 (540 aa).

2 L27 domains span residues 1–48 and 49–107; these read MQQV…EDSK and LEAV…YDSP. The region spanning 130–209 is the PDZ domain; that stretch reads ILGIHKRAGE…SVTLKILPSY (80 aa). An SH3 domain is found at 215–284; that stretch reads PQQVFVKCHF…PSQFLEEKRK (70 aa). The Guanylate kinase-like domain maps to 338-525; sequence RKTLVLIGAQ…AFEKLQTAIE (188 aa). Tyr500 bears the Phosphotyrosine mark.

The protein belongs to the MAGUK family. In terms of assembly, interacts with CADM1. Interacts with the LIN7 proteins. In terms of tissue distribution, abundant in testis, brain, and kidney with lower levels detectable in other tissues.

Its subcellular location is the membrane. The protein is Protein PALS2 of Homo sapiens (Human).